The chain runs to 140 residues: ATP synthase epsilon chain (140 aa).

Belongs to the ATPase epsilon chain family. In terms of assembly, F-type ATPases have 2 components, CF(1) - the catalytic core - and CF(0) - the membrane proton channel. CF(1) has five subunits: alpha(3), beta(3), gamma(1), delta(1), epsilon(1). CF(0) has three main subunits: a, b and c.

Its subcellular location is the cell inner membrane. Its function is as follows. Produces ATP from ADP in the presence of a proton gradient across the membrane. In Marinobacter nauticus (strain ATCC 700491 / DSM 11845 / VT8) (Marinobacter aquaeolei), this protein is ATP synthase epsilon chain.